Here is a 191-residue protein sequence, read N- to C-terminus: MVKIRLHTTVSSETARKIEDLKKKHRTTSSVVEKAVDLLYTSENFSRLGDEDLLILAFIRELNFMLCAKDHYTALVEGDAERAVRESMIEMAVKYLSKKPISDLDFEELLSVVARLWNLLNRAEHAEVQKDGEKLNFVFYHDMRSKAVSELHLNLLKYLYEKYYSKKYEMQVDTITVNGFSVLFFPKDSVD.

This is an uncharacterized protein from Archaeoglobus fulgidus (strain ATCC 49558 / DSM 4304 / JCM 9628 / NBRC 100126 / VC-16).